The sequence spans 597 residues: Arginine--tRNA ligase (597 aa).

A 'HIGH' region motif is present at residues 125-135; it reads PNTNKPLHLGH.

This sequence belongs to the class-I aminoacyl-tRNA synthetase family. Monomer.

The protein localises to the cytoplasm. The enzyme catalyses tRNA(Arg) + L-arginine + ATP = L-arginyl-tRNA(Arg) + AMP + diphosphate. The sequence is that of Arginine--tRNA ligase from Bacteroides fragilis (strain YCH46).